Here is a 111-residue protein sequence, read N- to C-terminus: Large ribosomal subunit protein uL24 (111 aa).

The protein belongs to the universal ribosomal protein uL24 family. Part of the 50S ribosomal subunit.

In terms of biological role, one of two assembly initiator proteins, it binds directly to the 5'-end of the 23S rRNA, where it nucleates assembly of the 50S subunit. Its function is as follows. One of the proteins that surrounds the polypeptide exit tunnel on the outside of the subunit. The protein is Large ribosomal subunit protein uL24 of Chlamydia muridarum (strain MoPn / Nigg).